Here is a 220-residue protein sequence, read N- to C-terminus: Cysteine-rich venom protein VAR5 (220 aa).

Residues 1 to 22 (MILLKLYLTLAAILCQSRGTTS) form the signal peptide. One can recognise an SCP domain in the interval 41 to 169 (NKHNDLRRTV…PLKYFLVCQY (129 aa)). Intrachain disulfides connect C77/C156, C95/C170, C151/C167, C189/C196, and C192/C201. The ShKT domain maps to 205–220 (CEHSNQYINCPDLTKQ).

This sequence belongs to the CRISP family. Post-translationally, contains 8 disulfide bonds. As to expression, expressed by the venom gland.

The protein localises to the secreted. In terms of biological role, blocks ryanodine receptors, and potassium channels. The protein is Cysteine-rich venom protein VAR5 of Varanus acanthurus (Ridge-tailed monitor).